A 131-amino-acid polypeptide reads, in one-letter code: Ribonuclease VapC42 (131 aa).

Residues 1 to 125 (MIVDTSAIVA…FRGDDFTHTD (125 aa)) form the PINc domain. Mg(2+)-binding residues include aspartate 4 and aspartate 100.

It belongs to the PINc/VapC protein family. Mg(2+) is required as a cofactor.

Toxic component of a type II toxin-antitoxin (TA) system. An RNase. Its cognate antitoxin is VapB42. This Mycobacterium tuberculosis (strain CDC 1551 / Oshkosh) protein is Ribonuclease VapC42.